A 343-amino-acid chain; its full sequence is Major histocompatibility complex class I-related protein 1 (343 aa).

A signal peptide spans 1-18; the sequence is MMFLLPFLTVFLAKQSHT. Residues 19-105 form an alpha-1 region; sequence RTHSLRYFRL…RHLQRHYNHS (87 aa). The tract at residues 19-197 is antigen-binding cleft; the sequence is RTHSLRYFRL…EYGSDALERT (179 aa). Residues 19–298 are Extracellular-facing; that stretch reads RTHSLRYFRL…QESGNTLLVA (280 aa). 8-(9H-purin-6-yl)-2-oxa-8-azabicyclo[3.3.1]nona-3,6-diene-4,6-dicarbaldehyde-binding residues include Tyr-25 and Arg-27. 5-(2-oxoethylideneamino)-6-(D-ribitylamino)uracil-binding residues include Arg-27, Ser-42, and Lys-61. 5-(2-oxopropylideneamino)-6-(D-ribitylamino)uracil is bound by residues Arg-27, Ser-42, and Lys-61. Residues Arg-27, Ser-42, and Lys-61 each contribute to the 7-hydroxy-6-methyl-8-(1-D-ribityl)lumazine site. Lys-61 and His-76 together coordinate 8-(9H-purin-6-yl)-2-oxa-8-azabicyclo[3.3.1]nona-3,6-diene-4,6-dicarbaldehyde. Residue Lys-61 participates in 2-amino-4-oxopteridine-6-carbaldehyde binding. Position 61 (Lys-61) interacts with pyridoxal. N-linked (GlcNAc...) asparagine glycosylation is present at Asn-103. Residues 106–197 are alpha-2; sequence GLHTYQRMIG…EYGSDALERT (92 aa). Arg-112 lines the 8-(9H-purin-6-yl)-2-oxa-8-azabicyclo[3.3.1]nona-3,6-diene-4,6-dicarbaldehyde pocket. Residues Arg-112, Tyr-170, and Gln-171 each contribute to the 5-(2-oxoethylideneamino)-6-(D-ribitylamino)uracil site. Arg-112, Tyr-170, and Gln-171 together coordinate 5-(2-oxopropylideneamino)-6-(D-ribitylamino)uracil. 7-hydroxy-6-methyl-8-(1-D-ribityl)lumazine-binding residues include Arg-112, Tyr-170, and Gln-171. 2 cysteine pairs are disulfide-bonded: Cys-116–Cys-179 and Cys-218–Cys-274. Residues 198–289 are alpha-3; it reads EHPVVRTTRK…GLQMVLEAPQ (92 aa). One can recognise an Ig-like C1-type domain in the interval 200–302; the sequence is PVVRTTRKET…NTLLVANTIS (103 aa). The connecting peptide stretch occupies residues 290-298; the sequence is ESGNTLLVA. A helical transmembrane segment spans residues 299 to 319; it reads NTISGTIILIIVLAGVGALIW. The Cytoplasmic segment spans residues 320–343; the sequence is RRRSREPKEVMYQPTQVNEGSSPS.

Heterotrimer that consists of MR1, B2M and metabolite antigen. Major classes of metabolite ligands presented by MR1 include riboflavin-related antigens, pyrimidines and ribityl lumazines, nucleobase adducts and folate derivatives. Forms reversible covalent Schiff base complexes with microbial pyrimidine-based metabolite, which serves as a molecular switch triggering complete folding, stable association with B2M and translocation of the ternary complex from endoplasmic reticulum to the plasma membrane. Alternatively, forms non-Schiff base complexes with ribityl lumazines. On antigen-presenting cells, the ternary complex interacts with TCR on MR1-restricted T cells. Interacts with TAPBP and TAPBPL chaperones in the endoplasmic reticulum. TAPBP associated or not with MHC class I peptide loading complex binds ligand-free MR1 or MR1-B2M complex, providing for stable MR1 pools ready for metabolite antigen processing. TAPBPL interacts with MR1 in a ligand-independent way; this interaction may stabilize MR1 pool and facilitate ligand loading and dissociation. Structurally, MR1-B2M heterodimer adopts a topology similar to classical MHC class I molecules, with alpha-1 and alpha-2 domains of MR1 forming the antigen-binding cleft composed of two alpha-helices resting on a floor of 7-stranded anti-parallel beta-pleated sheet. MR1-B2M heterodimer (via alpha-helices) interacts with TCR (via CDR domains). In terms of processing, N-glycosylated. As to expression, expressed in kidney, liver, testis, spleen, thymus, brain, and heart.

The protein resides in the cell membrane. Its subcellular location is the endoplasmic reticulum membrane. It is found in the golgi apparatus membrane. The protein localises to the early endosome membrane. It localises to the late endosome membrane. Its function is as follows. Antigen-presenting molecule specialized in displaying microbial pyrimidine-based metabolites to alpha-beta T cell receptors (TCR) on innate-type mucosal-associated invariant T (MAIT) cells. In complex with B2M preferentially presents riboflavin-derived metabolites to semi-invariant TCRs on MAIT cells, guiding immune surveillance of the microbial metabolome at mucosal epithelial barriers. Signature pyrimidine-based microbial antigens are generated via non-enzymatic condensation of metabolite intermediates of the riboflavin pathway with by-products arising from other metabolic pathways such as glycolysis. Typical potent antigenic metabolites are 5-(2-oxoethylideneamino)-6-D-ribitylaminouracil (5-OE-RU) and 5-(2-oxopropylideneamino)-6-D-ribitylaminouracil (5-OP-RU), products of condensation of 5-amino-6-D-ribityaminouracil (5-A-RU) with glyoxal or methylglyoxal by-products, respectively. May present microbial antigens to various MAIT cell subsets, providing for unique recognition of diverse microbes, including pathogens that do not synthesize riboflavin. Upon antigen recognition, elicits rapid innate-type MAIT cell activation to eliminate pathogenic microbes by directly killing infected cells. During T cell development, drives thymic selection and post-thymic terminal differentiation of MAIT cells in a process dependent on commensal microflora. Acts as an immune sensor of cancer cell metabolome. May present a tumor-specific or -associated metabolite essential for cancer cell survival to a pan-cancer TCR on a non-MAIT CD8-positive T cell clone, triggering T cell-mediated killing of a wide range of cancer cell types. May present tumor-enriched pyridoxal and pyridoxal 5'-phosphate antigens, enabling preferential recognition of cancer cells. Presents nucleobase carbonyl adducts generated during oxidative stress. Captures M3Ade, a nucleobase adduct composed of one adenine modified by a malondialdehyde trimer, for recognition by MR1-restricted T cell clones expressing a polyclonal TCR repertoire. This is Major histocompatibility complex class I-related protein 1 from Rattus norvegicus (Rat).